The primary structure comprises 248 residues: CKLF-like MARVEL transmembrane domain-containing protein 2 (248 aa).

The tract at residues 1–63 is disordered; the sequence is MAPKAAKGAK…KAVQPKHEVG (63 aa). Positions 12-22 are enriched in pro residues; sequence EPAPAPPPPGA. The span at 23–63 shows a compositional bias: basic and acidic residues; it reads KPEEDKKDGKEPSDKPQKAVQDHKEPSDKPQKAVQPKHEVG. The MARVEL domain maps to 82-204; that stretch reads FWLLGHAEIK…DVCLQRNHFR (123 aa). Helical transmembrane passes span 116 to 136, 147 to 167, and 178 to 198; these read LIITMEISFFSFFILLYSFAI, ISDLFNDLIACAFLVGAVVFA, and YLLAVILIGAAGVFAFIDVCL. The tract at residues 208–248 is disordered; it reads AKKHMLVPPPGKEKGPQQGKGPEPAKPPEPGKPPGPAKGKK. A compositionally biased stretch (pro residues) spans 231-248; that stretch reads PAKPPEPGKPPGPAKGKK.

The protein belongs to the chemokine-like factor family. In terms of tissue distribution, highly expressed in testis.

Its subcellular location is the membrane. This is CKLF-like MARVEL transmembrane domain-containing protein 2 (CMTM2) from Homo sapiens (Human).